The primary structure comprises 83 residues: Mitochondrial import inner membrane translocase subunit Tim8 (83 aa).

A Twin CX3C motif motif is present at residues 35 to 60 (CWDVCFADYRPPSKMDGKTQTCIQNC). Cystine bridges form between cysteine 35–cysteine 60 and cysteine 39–cysteine 56.

The protein belongs to the small Tim family. Heterohexamer; composed of 3 copies of ddp-1/tim-8 and 3 copies of tin-13/tim-13, named soluble 70 kDa complex. Associates with the TIM22 complex, whose core is composed of tim-22.

It is found in the mitochondrion inner membrane. Mitochondrial intermembrane chaperone that participates in the import and insertion of some multi-pass transmembrane proteins into the mitochondrial inner membrane. Also required for the transfer of beta-barrel precursors from the TOM complex to the sorting and assembly machinery (SAM complex) of the outer membrane. Acts as a chaperone-like protein that protects the hydrophobic precursors from aggregation and guide them through the mitochondrial intermembrane space. The ddp-1/tim-8-tim-13 complex mediates the import of some proteins while the predominant tim-9/tin-9.1-tim-10/tin-10 70 kDa complex mediates the import of much more proteins. The sequence is that of Mitochondrial import inner membrane translocase subunit Tim8 from Caenorhabditis elegans.